A 313-amino-acid polypeptide reads, in one-letter code: MKVSVVVCTYSMERYESFSETVESVLAQTYEPLELVIVVDGNEEEFDRVQDDFGDIDDVVLHCNDENRGISYSRTKGAELGTGDVVAMIDDDATAEPDWIETLVDTYENNPDAVAVGGTVVPDWVARKPEFFPEEFYWLVGCDERGFGEHMEEVRNTYGSNISFKRDVFLEVGGYDTNTGRKGDKHVQAHEAPVCIRIYEQTGERVIYNKQARVNHKLFEYRTEFDWLVFRSFWQGYSKRVMDLLYPQASDDKNAYLKDLMLVYVVDRLKNLVEDPSLAQVQQLIAIFVFTAAVGFGYVYGLLTPNLVEKTNN.

A helical membrane pass occupies residues 284-304; sequence LIAIFVFTAAVGFGYVYGLLT.

Belongs to the glycosyltransferase 2 family.

It is found in the cell membrane. The enzyme catalyses an archaeal dolichyl alpha-D-glucosyl phosphate + UDP-alpha-D-glucuronate = an archaeal dolichyl beta-D-glucuronosyl-(1-&gt;4)-alpha-D-glucosyl phosphate + UDP + H(+). It functions in the pathway cell surface structure biogenesis; S-layer biogenesis. Its function is as follows. Involved in the protein N-glycosylation pathway responsible for the assembly and attachment of an N-linked pentasaccharide that decorates the S-layer glycoprotein and flagellins. Catalyzes the transfer of a glucuronate residue (GlcA) to a glucose residue already bound to a dolichol phosphate (DolP), a compound that serves as a glycan lipid carrier in Archaea. In vitro, is able to add GlcA to DolP-Glc in which the omega-position isoprene is not saturated. However, the likely physiological lipid substrate is alpha,omega-saturated. The sequence is that of Glucosyl-dolichyl phosphate glucuronosyltransferase from Haloferax volcanii (strain ATCC 29605 / DSM 3757 / JCM 8879 / NBRC 14742 / NCIMB 2012 / VKM B-1768 / DS2) (Halobacterium volcanii).